Consider the following 223-residue polypeptide: MNIIIFSLMTISFLRARFGYEKEILPMMDTASDKSYLQGPPNPYTATVNPLERLISDTYLKVTGILSHYFAYYQENVAEFRRWFQSIYYEMDDDTRKKILNELNLNLRSMDDLENFWTETQGAILKGNLLELSDLLKGLEEAVNAKTHMSSEANNDLIKSKINFKDKAVDFLNQLNKIYGFLDLGLSYHTSNRFTDVHAMFLDAAASKKKLDKSFESISGIDD.

Positions 1–16 are cleaved as a signal peptide; that stretch reads MNIIIFSLMTISFLRA. Positions 207–214 match the HBM motif; the sequence is SKKKLDKS.

The protein localises to the spore core. It localises to the spore wall. Its subcellular location is the spore. The protein resides in the perispore. Its function is as follows. Spore wall protein involved in the adhesion to host cells surface. Microsporidian spore adherence is an integral part of activation and host cell invasion which requires the extrusion at the spore apex of a very long and coiled structure, the polar tube, through which the sporoplasm is pushed to enter into the potential host cell. This is Spore wall protein 26 (SWP26) from Nosema bombycis (strain CQ1 / CVCC 102059) (Microsporidian parasite).